We begin with the raw amino-acid sequence, 340 residues long: Phosphoribosylformylglycinamidine cyclo-ligase (340 aa).

The protein belongs to the AIR synthase family.

It is found in the cytoplasm. It catalyses the reaction 2-formamido-N(1)-(5-O-phospho-beta-D-ribosyl)acetamidine + ATP = 5-amino-1-(5-phospho-beta-D-ribosyl)imidazole + ADP + phosphate + H(+). The protein operates within purine metabolism; IMP biosynthesis via de novo pathway; 5-amino-1-(5-phospho-D-ribosyl)imidazole from N(2)-formyl-N(1)-(5-phospho-D-ribosyl)glycinamide: step 2/2. This Macrococcus caseolyticus (strain JCSC5402) (Macrococcoides caseolyticum) protein is Phosphoribosylformylglycinamidine cyclo-ligase.